The chain runs to 176 residues: Odorant-binding protein 2a (176 aa).

The signal sequence occupies residues 1-19 (MKSLLLTILLLGLVAVLKA). N-linked (GlcNAc...) asparagine glycans are attached at residues Asn-42 and Asn-124. Cys-79 and Cys-172 form a disulfide bridge.

Belongs to the calycin superfamily. Lipocalin family. In terms of tissue distribution, expressed in the liver (at protein level). Expressed in epididymis.

It is found in the secreted. Its function is as follows. Involved in the regulation of systematic glucose homeostasis and insulin sensitivity. Involved in the regulation of liver lipid levels by positive regulation of hepatic lipogenesis and negative regulation of fatty acid beta-oxidation; via downstream transcriptional regulation of CPT1A and hepatic lipogenic program gene expression. May regulate hepatic lipogenesis and fatty acid beta-oxidation in an autocrine or paracrine manner. The protein is Odorant-binding protein 2a (Obp2a) of Mus musculus (Mouse).